We begin with the raw amino-acid sequence, 306 residues long: Aspartate carbamoyltransferase catalytic subunit (306 aa).

Positions 51 and 52 each coordinate carbamoyl phosphate. Lys80 contributes to the L-aspartate binding site. Positions 101, 129, and 132 each coordinate carbamoyl phosphate. L-aspartate contacts are provided by Arg162 and Arg224. Carbamoyl phosphate is bound by residues Leu263 and Pro264.

This sequence belongs to the aspartate/ornithine carbamoyltransferase superfamily. ATCase family. In terms of assembly, heterododecamer (2C3:3R2) of six catalytic PyrB chains organized as two trimers (C3), and six regulatory PyrI chains organized as three dimers (R2).

It catalyses the reaction carbamoyl phosphate + L-aspartate = N-carbamoyl-L-aspartate + phosphate + H(+). It functions in the pathway pyrimidine metabolism; UMP biosynthesis via de novo pathway; (S)-dihydroorotate from bicarbonate: step 2/3. In terms of biological role, catalyzes the condensation of carbamoyl phosphate and aspartate to form carbamoyl aspartate and inorganic phosphate, the committed step in the de novo pyrimidine nucleotide biosynthesis pathway. This chain is Aspartate carbamoyltransferase catalytic subunit, found in Parabacteroides distasonis (strain ATCC 8503 / DSM 20701 / CIP 104284 / JCM 5825 / NCTC 11152).